The sequence spans 254 residues: Phosphatidylglycerol--prolipoprotein diacylglyceryl transferase (254 aa).

Helical transmembrane passes span 11–31, 49–69, 84–104, and 109–129; these read LAIRWYGVVISIGAALGLLLA, FLIAFPSAIIGARLYYVIFEF, QGGLAIHGGIIFGVLAVYIYL, and ESFFEYVDVAAPSIILGQAIG. Arg-130 provides a ligand contact to a 1,2-diacyl-sn-glycero-3-phospho-(1'-sn-glycerol). The next 3 membrane-spanning stretches (helical) occupy residues 169-189, 196-216, and 228-248; these read PTFLYESIWNFIVCIFLVYLL, GIVFMAYIGLYSLGRFFIEGL, and VAQLISVLGIILSIFFIYNII.

The protein belongs to the Lgt family.

It is found in the cell membrane. It catalyses the reaction L-cysteinyl-[prolipoprotein] + a 1,2-diacyl-sn-glycero-3-phospho-(1'-sn-glycerol) = an S-1,2-diacyl-sn-glyceryl-L-cysteinyl-[prolipoprotein] + sn-glycerol 1-phosphate + H(+). It functions in the pathway protein modification; lipoprotein biosynthesis (diacylglyceryl transfer). Functionally, catalyzes the transfer of the diacylglyceryl group from phosphatidylglycerol to the sulfhydryl group of the N-terminal cysteine of a prolipoprotein, the first step in the formation of mature lipoproteins. In Clostridium botulinum (strain Langeland / NCTC 10281 / Type F), this protein is Phosphatidylglycerol--prolipoprotein diacylglyceryl transferase.